A 363-amino-acid chain; its full sequence is Spermidine/putrescine import ATP-binding protein PotA 2 (363 aa).

One can recognise an ABC transporter domain in the interval 6-236 (LEIRNVTRRF…PRSRFVADFI (231 aa)). 38–45 (GPSGCGKT) lines the ATP pocket.

Belongs to the ABC transporter superfamily. Spermidine/putrescine importer (TC 3.A.1.11.1) family. The complex is composed of two ATP-binding proteins (PotA), two transmembrane proteins (PotB and PotC) and a solute-binding protein (PotD).

The protein resides in the cell inner membrane. It carries out the reaction ATP + H2O + polyamine-[polyamine-binding protein]Side 1 = ADP + phosphate + polyamineSide 2 + [polyamine-binding protein]Side 1.. Its function is as follows. Part of the ABC transporter complex PotABCD involved in spermidine/putrescine import. Responsible for energy coupling to the transport system. This Pseudomonas aeruginosa (strain ATCC 15692 / DSM 22644 / CIP 104116 / JCM 14847 / LMG 12228 / 1C / PRS 101 / PAO1) protein is Spermidine/putrescine import ATP-binding protein PotA 2.